Here is a 280-residue protein sequence, read N- to C-terminus: Probable endonuclease 4 (280 aa).

Zn(2+)-binding residues include His-69, His-109, Glu-145, Asp-179, His-182, His-216, Asp-229, His-231, and Glu-261.

This sequence belongs to the AP endonuclease 2 family. It depends on Zn(2+) as a cofactor.

It carries out the reaction Endonucleolytic cleavage to 5'-phosphooligonucleotide end-products.. Functionally, endonuclease IV plays a role in DNA repair. It cleaves phosphodiester bonds at apurinic or apyrimidinic (AP) sites, generating a 3'-hydroxyl group and a 5'-terminal sugar phosphate. In Actinobacillus pleuropneumoniae serotype 7 (strain AP76), this protein is Probable endonuclease 4.